The primary structure comprises 570 residues: Urease subunit alpha (570 aa).

The Urease domain maps to 131–570; that stretch reads GGFDSHIHFI…LPLAQRYFMF (440 aa). Ni(2+)-binding residues include H136, H138, and K219. K219 carries the N6-carboxylysine modification. H221 serves as a coordination point for substrate. Ni(2+) contacts are provided by H248 and H274. H322 functions as the Proton donor in the catalytic mechanism. D362 serves as a coordination point for Ni(2+).

It belongs to the metallo-dependent hydrolases superfamily. Urease alpha subunit family. As to quaternary structure, heterotrimer of UreA (gamma), UreB (beta) and UreC (alpha) subunits. Three heterotrimers associate to form the active enzyme. Ni cation serves as cofactor. In terms of processing, carboxylation allows a single lysine to coordinate two nickel ions.

It localises to the cytoplasm. The catalysed reaction is urea + 2 H2O + H(+) = hydrogencarbonate + 2 NH4(+). It functions in the pathway nitrogen metabolism; urea degradation; CO(2) and NH(3) from urea (urease route): step 1/1. The sequence is that of Urease subunit alpha from Rhodopseudomonas palustris (strain TIE-1).